The sequence spans 345 residues: DNA N(6)-methyladenine demethylase ALKBH1A (345 aa).

Substrate-binding positions include Trp-179 and 186 to 188 (FDW). The region spanning 225 to 345 (RPEGAIVNYF…RININIRQVF (121 aa)) is the Fe2OG dioxygenase domain. A 2-oxoglutarate-binding site is contributed by 232–234 (NYF). The Fe cation site is built by His-243, Asp-245, and His-299. 336–342 (RININIR) is a binding site for 2-oxoglutarate.

It belongs to the alkB family. Requires Fe(2+) as cofactor. In terms of tissue distribution, mostly expressed in siliques, to a lower extent in roots, seedlings and rosette leaves, but barely in cauline leaves, stems and flowers.

It localises to the nucleus. The protein localises to the cytoplasm. It catalyses the reaction an N(6)-methyl-2'-deoxyadenosine in DNA + 2-oxoglutarate + O2 = a 2'-deoxyadenosine in DNA + formaldehyde + succinate + CO2. Functionally, dioxygenase that catalyzes DNA N(6)-methyladenine (6 mA) demethylation to modulate gene expression and regulate seed germination. The sequence is that of DNA N(6)-methyladenine demethylase ALKBH1A from Arabidopsis thaliana (Mouse-ear cress).